The sequence spans 160 residues: Cytochrome b6-f complex subunit 4 (160 aa).

Helical transmembrane passes span 36–56, 95–115, and 131–151; these read LLYIFPVVIFGTIACNVGLAV, LLGVLLMAAVPAGLLTVPFLE, and TVFLFGTVVALWLGIGAALPI.

Belongs to the cytochrome b family. PetD subfamily. As to quaternary structure, the 4 large subunits of the cytochrome b6-f complex are cytochrome b6, subunit IV (17 kDa polypeptide, petD), cytochrome f and the Rieske protein, while the 4 small subunits are petG, petL, petM and petN. The complex functions as a dimer.

Its subcellular location is the plastid. The protein resides in the chloroplast thylakoid membrane. Its function is as follows. Component of the cytochrome b6-f complex, which mediates electron transfer between photosystem II (PSII) and photosystem I (PSI), cyclic electron flow around PSI, and state transitions. The polypeptide is Cytochrome b6-f complex subunit 4 (Spirogyra maxima (Green alga)).